Consider the following 742-residue polypeptide: Condensin complex subunit 2 (742 aa).

4 disordered regions span residues 1 to 62 (MKRA…FNSS), 151 to 172 (QQTE…KKER), 452 to 473 (FNSS…STER), and 564 to 604 (IQPH…PSSS). A compositionally biased stretch (basic and acidic residues) spans 21–39 (ALEKKRAKENSRKQRELRR). A compositionally biased stretch (polar residues) spans 53-62 (LNNSSPFNSS). Acidic residues predominate over residues 154-165 (EEGEDAENDDED). Composition is skewed to polar residues over residues 452–470 (FNSS…SLSS) and 592–604 (PKQT…PSSS).

It belongs to the CND2 (condensin subunit 2) family. As to quaternary structure, component of the condensin complex, which contains the cut14/smc2 and cut3/smc2 heterodimer, and three non SMC subunits that probably regulate the complex: cnd1, cnd2 and cnd3.

Its subcellular location is the nucleus. It localises to the cytoplasm. The protein localises to the chromosome. Its function is as follows. Regulatory subunit of the condensin complex, a complex required for conversion of interphase chromatin into mitotic-like condense chromosomes. The condensin complex probably introduces positive supercoils into relaxed DNA in the presence of type I topoisomerases and converts nicked DNA into positive knotted forms in the presence of type II topoisomerases. The condensin complex probably also plays a role during interphase in processes such as DNA repair. The chain is Condensin complex subunit 2 (cnd2) from Schizosaccharomyces pombe (strain 972 / ATCC 24843) (Fission yeast).